We begin with the raw amino-acid sequence, 321 residues long: CPX chromosomal region candidate gene 1 protein homolog (321 aa).

A disordered region spans residues 1 to 83 (MSSPTKEGSD…TEIQKDQREE (83 aa)). Polar residues-rich tracts occupy residues 21-32 (NEPSNDCTTDIE) and 44-60 (VETN…TSQE).

The sequence is that of CPX chromosomal region candidate gene 1 protein homolog (CPXCR1) from Macaca fascicularis (Crab-eating macaque).